Consider the following 186-residue polypeptide: uncharacterized protein (186 aa).

Helical transmembrane passes span 5 to 25 (LIAC…FEDI), 39 to 59 (IITI…KLFA), 62 to 82 (NLLF…ILLF), and 122 to 142 (GFFE…IALM).

The protein resides in the cell membrane. This is an uncharacterized protein from Borreliella burgdorferi (strain ATCC 35210 / DSM 4680 / CIP 102532 / B31) (Borrelia burgdorferi).